The sequence spans 308 residues: uncharacterized protein (308 aa).

The next 5 membrane-spanning stretches (helical) occupy residues 46–66 (GISA…GVLQ), 82–102 (LLAA…LLWM), 159–179 (AAIG…FLIF), 190–210 (FFQV…IGVL), and 271–291 (LYLF…SLYF).

It belongs to the oxidase-dependent Fe transporter (OFeT) (TC 9.A.10.1) family.

Its subcellular location is the cell membrane. This is an uncharacterized protein from Synechocystis sp. (strain ATCC 27184 / PCC 6803 / Kazusa).